Consider the following 491-residue polypeptide: MKYQAKNTALSQATDCIVLGIYENNKFSKSFNEIDQLTQGYLNDLVKSGELTGKLAQTILLRDLQGLSAKRLLIVGCGKKGELTERQYKQIIQAVLKTLKETNTREVISYLTEIELKDRDLYWNIRFAIETIEHTNYQFDHFKSQKAETSVLESFVFNTDCNQAQQAISHANAISSGIKAARDIANMPPNICNPAYLAEQAKNLAENSTALSLKVVDEEEMAKLGMNAYLAVSKGSENRAYMSVLTFNNALDKNAKPIVLVGKGLTFDAGGISLKPAADMDEMKYDMCGAASVFGTMKAIAQLNLPLNVIGVLAGCENLPDGNAYRPGDILTTMNGLTVEVLNTDAEGRLVLCDTLTYVERFEPELVIDVATLTGACVVALGQHNSGLVSTDNNLANALLQAATETTDKAWRLPLSEEYQEQLKSPFADLANIGGRWGGAITAGAFLSNFTKKYRWAHLDIAGTAWLQGANKGATGRPVSLLTQFLINQVK.

Positions 263 and 268 each coordinate Mn(2+). K275 is an active-site residue. Positions 286, 345, and 347 each coordinate Mn(2+). Residue R349 is part of the active site.

Belongs to the peptidase M17 family. Requires Mn(2+) as cofactor.

It localises to the cytoplasm. It carries out the reaction Release of an N-terminal amino acid, Xaa-|-Yaa-, in which Xaa is preferably Leu, but may be other amino acids including Pro although not Arg or Lys, and Yaa may be Pro. Amino acid amides and methyl esters are also readily hydrolyzed, but rates on arylamides are exceedingly low.. The enzyme catalyses Release of an N-terminal amino acid, preferentially leucine, but not glutamic or aspartic acids.. In terms of biological role, presumably involved in the processing and regular turnover of intracellular proteins. Catalyzes the removal of unsubstituted N-terminal amino acids from various peptides. The sequence is that of Probable cytosol aminopeptidase from Haemophilus influenzae (strain PittGG).